The sequence spans 354 residues: Small ribosomal subunit protein uS2 (354 aa).

This sequence belongs to the universal ribosomal protein uS2 family.

The protein is Small ribosomal subunit protein uS2 of Methylorubrum populi (strain ATCC BAA-705 / NCIMB 13946 / BJ001) (Methylobacterium populi).